We begin with the raw amino-acid sequence, 141 residues long: Protein Turandot Z (141 aa).

Residues 1–23 form the signal peptide; the sequence is MYFAIRLSFVLAVLFCLTGNGNA.

Belongs to the Turandot family.

The protein resides in the secreted. Its function is as follows. A humoral factor that may play a role in stress tolerance. The sequence is that of Protein Turandot Z from Drosophila yakuba (Fruit fly).